The sequence spans 55 residues: Large ribosomal subunit protein bL33 (55 aa).

It belongs to the bacterial ribosomal protein bL33 family.

In Deinococcus deserti (strain DSM 17065 / CIP 109153 / LMG 22923 / VCD115), this protein is Large ribosomal subunit protein bL33.